A 196-amino-acid chain; its full sequence is UPF0340 protein TTHA0583 (196 aa).

It belongs to the UPF0340 family.

This is UPF0340 protein TTHA0583 from Thermus thermophilus (strain ATCC 27634 / DSM 579 / HB8).